The primary structure comprises 67 residues: Large ribosomal subunit protein bL35 (67 aa).

This sequence belongs to the bacterial ribosomal protein bL35 family.

This Synechocystis sp. (strain ATCC 27184 / PCC 6803 / Kazusa) protein is Large ribosomal subunit protein bL35.